Consider the following 102-residue polypeptide: Putative pterin-4-alpha-carbinolamine dehydratase (102 aa).

It belongs to the pterin-4-alpha-carbinolamine dehydratase family.

The enzyme catalyses (4aS,6R)-4a-hydroxy-L-erythro-5,6,7,8-tetrahydrobiopterin = (6R)-L-erythro-6,7-dihydrobiopterin + H2O. This Burkholderia cenocepacia (strain ATCC BAA-245 / DSM 16553 / LMG 16656 / NCTC 13227 / J2315 / CF5610) (Burkholderia cepacia (strain J2315)) protein is Putative pterin-4-alpha-carbinolamine dehydratase.